A 275-amino-acid polypeptide reads, in one-letter code: Probable CCR4-associated factor 1 homolog 7 (275 aa).

The a divalent metal cation site is built by D40, E42, D167, and D236.

This sequence belongs to the CAF1 family. In terms of assembly, component of the CCR4-NOT complex, at least composed of CRR4 and CAF1 proteins. A divalent metal cation serves as cofactor.

Its subcellular location is the nucleus. The protein localises to the cytoplasm. The enzyme catalyses Exonucleolytic cleavage of poly(A) to 5'-AMP.. Its function is as follows. Ubiquitous transcription factor required for a diverse set of processes. It is a component of the CCR4 complex involved in the control of gene expression. This is Probable CCR4-associated factor 1 homolog 7 (CAF1-7) from Arabidopsis thaliana (Mouse-ear cress).